We begin with the raw amino-acid sequence, 315 residues long: Annexin Gh1 (315 aa).

4 Annexin repeats span residues 10 to 81 (PSVS…LWAL), 82 to 153 (DPAE…PLVS), 165 to 236 (TLAK…STVK), and 240 to 311 (YPEK…VLAG). The Ca(2+) site is built by phenylalanine 23, glycine 25, glycine 27, and glutamate 67. 7 residues coordinate Ca(2+): isoleucine 253, arginine 255, glycine 257, valine 295, aspartate 297, threonine 298, and glutamate 303.

Belongs to the annexin family. In terms of assembly, monomer. Trimer. Oligomerization is calcium-independent. Disassembly of the oligomers seems to be required for calcium-binding.

The protein localises to the membrane. Functionally, binds to phospholipid vesicles in a calcium-dependent manner in vitro. Prefers phosphatidyl-serine containing membranes. May have a role in the membrane cytoskeleton scaffolding or exocytotic processes. May be involved in oxidative stress response. This chain is Annexin Gh1, found in Gossypium hirsutum (Upland cotton).